The following is a 123-amino-acid chain: Intracellular iron chaperone frataxin (123 aa).

Homodimer, upon Fe(2+) binding. Interacts with the SufS/SufU complex. Interacts with CpfC. The cofactor is Fe(2+).

It is found in the cytoplasm. Plays an essential role in iron intracellular trafficking to iron cofactor biogenesis systems including iron-sulfur cluster (Fe-S) or heme assembly. Promotes the biosynthesis of iron-sulfur clusters by delivering Fe to the complex composed of the cysteine desulfurase SufS and the zinc-dependent sulfurtransferase SufU. Also plays a critical role in coproporphyrin-dependent heme b biogenesis and thus provides an essential function for the bacterial global metabolism. The chain is Intracellular iron chaperone frataxin (fra) from Bacillus subtilis (strain 168).